A 232-amino-acid chain; its full sequence is Protein FAM228B (232 aa).

Belongs to the FAM228 family.

The sequence is that of Protein FAM228B (Fam228b) from Mus musculus (Mouse).